A 285-amino-acid polypeptide reads, in one-letter code: Elongation factor Ts (285 aa).

Residues 82–85 (TDFV) are involved in Mg(2+) ion dislocation from EF-Tu.

This sequence belongs to the EF-Ts family.

The protein localises to the cytoplasm. Associates with the EF-Tu.GDP complex and induces the exchange of GDP to GTP. It remains bound to the aminoacyl-tRNA.EF-Tu.GTP complex up to the GTP hydrolysis stage on the ribosome. The protein is Elongation factor Ts of Sodalis glossinidius (strain morsitans).